The chain runs to 250 residues: Small ribosomal subunit protein uS2 (250 aa).

Belongs to the universal ribosomal protein uS2 family.

The sequence is that of Small ribosomal subunit protein uS2 from Albidiferax ferrireducens (strain ATCC BAA-621 / DSM 15236 / T118) (Rhodoferax ferrireducens).